A 336-amino-acid polypeptide reads, in one-letter code: Probable deoxyhypusine synthase (336 aa).

Catalysis depends on Lys308, which acts as the Nucleophile.

This sequence belongs to the deoxyhypusine synthase family. The cofactor is NAD(+).

It catalyses the reaction [eIF5A protein]-L-lysine + spermidine = [eIF5A protein]-deoxyhypusine + propane-1,3-diamine. The protein operates within protein modification; eIF5A hypusination. In terms of biological role, catalyzes the NAD-dependent oxidative cleavage of spermidine and the subsequent transfer of the butylamine moiety of spermidine to the epsilon-amino group of a specific lysine residue of the eIF-5A precursor protein to form the intermediate deoxyhypusine residue. This chain is Probable deoxyhypusine synthase, found in Thermococcus gammatolerans (strain DSM 15229 / JCM 11827 / EJ3).